We begin with the raw amino-acid sequence, 155 residues long: 1,4-dihydroxy-2-naphthoyl-CoA hydrolase (155 aa).

Asp22 is a catalytic residue.

This sequence belongs to the 4-hydroxybenzoyl-CoA thioesterase family. DHNA-CoA hydrolase subfamily.

It carries out the reaction 1,4-dihydroxy-2-naphthoyl-CoA + H2O = 1,4-dihydroxy-2-naphthoate + CoA + H(+). Its pathway is cofactor biosynthesis; phylloquinone biosynthesis. It participates in quinol/quinone metabolism; 1,4-dihydroxy-2-naphthoate biosynthesis; 1,4-dihydroxy-2-naphthoate from chorismate: step 7/7. Its function is as follows. Catalyzes the hydrolysis of 1,4-dihydroxy-2-naphthoyl-CoA (DHNA-CoA) to 1,4-dihydroxy-2-naphthoate (DHNA), a reaction involved in phylloquinone (vitamin K1) biosynthesis. This chain is 1,4-dihydroxy-2-naphthoyl-CoA hydrolase, found in Prochlorococcus marinus (strain SARG / CCMP1375 / SS120).